The sequence spans 61 residues: Small ribosomal subunit protein uS14B (61 aa).

Residues Cys-24, Cys-27, Cys-40, and Cys-43 each coordinate Zn(2+).

Belongs to the universal ribosomal protein uS14 family. Zinc-binding uS14 subfamily. Part of the 30S ribosomal subunit. Contacts proteins S3 and S10. It depends on Zn(2+) as a cofactor.

Its function is as follows. Binds 16S rRNA, required for the assembly of 30S particles and may also be responsible for determining the conformation of the 16S rRNA at the A site. In Streptococcus pyogenes serotype M6 (strain ATCC BAA-946 / MGAS10394), this protein is Small ribosomal subunit protein uS14B.